Consider the following 318-residue polypeptide: Mechanosensory protein 3 (318 aa).

2 LIM zinc-binding domains span residues 27–86 (NKCY…DYSA) and 87–152 (HRCA…PMDD). Residues 214 to 273 (RRGPRTTIRQNQLDVLNEMFSNTPKPSKHARAKLALETGLSMRVIQVWFQNRRSKERRLK) constitute a DNA-binding region (homeobox).

The protein resides in the nucleus. Specifies differentiation of the set of six touch receptor neurons. Binds cooperatively as a heterodimer with unc-86 to sites in the mec-3 gene promoter. The sequence is that of Mechanosensory protein 3 (mec-3) from Caenorhabditis briggsae.